We begin with the raw amino-acid sequence, 293 residues long: 4-hydroxybenzoate octaprenyltransferase (293 aa).

The next 8 helical transmembrane spans lie at 19–39 (PIGI…ASNG), 43–63 (WLIL…GCVV), 95–115 (LLAA…NALV), 135–155 (FFAI…PMSY), 158–178 (LWGE…FWAI), 209–229 (LTAI…VGAL), 231–251 (DFSG…VYHL), and 266–286 (FLHN…HFLL).

It belongs to the UbiA prenyltransferase family. Mg(2+) is required as a cofactor.

The protein resides in the cell inner membrane. It carries out the reaction all-trans-octaprenyl diphosphate + 4-hydroxybenzoate = 4-hydroxy-3-(all-trans-octaprenyl)benzoate + diphosphate. It participates in cofactor biosynthesis; ubiquinone biosynthesis. In terms of biological role, catalyzes the prenylation of para-hydroxybenzoate (PHB) with an all-trans polyprenyl group. Mediates the second step in the final reaction sequence of ubiquinone-8 (UQ-8) biosynthesis, which is the condensation of the polyisoprenoid side chain with PHB, generating the first membrane-bound Q intermediate 3-octaprenyl-4-hydroxybenzoate. The chain is 4-hydroxybenzoate octaprenyltransferase from Thiobacillus denitrificans (strain ATCC 25259 / T1).